The chain runs to 427 residues: Probable WRKY transcription factor 35 (427 aa).

2 disordered regions span residues 1 to 45 (MDNF…DLHV) and 266 to 336 (YTSE…HPPF). A compositionally biased stretch (pro residues) spans 23 to 40 (SPGPPEGPSPSSMSPPPT). Residues 209–275 (SGEVVPSDLW…YTSEHNHPWP (67 aa)) constitute a DNA-binding region (WRKY). Positions 284–310 (STRSSSSSSLNPSSKSSTAAATTSPSS) are enriched in low complexity. Over residues 311–333 (RVFQNNSSKDEPNNSNLPSSSTH) the composition is skewed to polar residues.

Belongs to the WRKY group II-e family.

It is found in the nucleus. Its function is as follows. Transcription factor. Interacts specifically with the W box (5'-(T)TGAC[CT]-3'), a frequently occurring elicitor-responsive cis-acting element. The polypeptide is Probable WRKY transcription factor 35 (WRKY35) (Arabidopsis thaliana (Mouse-ear cress)).